The chain runs to 212 residues: Pyridoxine/pyridoxamine 5'-phosphate oxidase (212 aa).

Residues 8-11 and Lys66 each bind substrate; that span reads RREY. FMN is bound by residues 61 to 66, 76 to 77, Arg82, Lys83, and Gln105; these read RIVLLK and FT. Substrate is bound by residues Tyr123, Arg127, and Ser131. FMN-binding positions include 140 to 141 and Trp185; that span reads QS. 191–193 serves as a coordination point for substrate; the sequence is RLH. An FMN-binding site is contributed by Arg195.

The protein belongs to the pyridoxamine 5'-phosphate oxidase family. In terms of assembly, homodimer. It depends on FMN as a cofactor.

It carries out the reaction pyridoxamine 5'-phosphate + O2 + H2O = pyridoxal 5'-phosphate + H2O2 + NH4(+). The catalysed reaction is pyridoxine 5'-phosphate + O2 = pyridoxal 5'-phosphate + H2O2. Its pathway is cofactor metabolism; pyridoxal 5'-phosphate salvage; pyridoxal 5'-phosphate from pyridoxamine 5'-phosphate: step 1/1. It participates in cofactor metabolism; pyridoxal 5'-phosphate salvage; pyridoxal 5'-phosphate from pyridoxine 5'-phosphate: step 1/1. Its function is as follows. Catalyzes the oxidation of either pyridoxine 5'-phosphate (PNP) or pyridoxamine 5'-phosphate (PMP) into pyridoxal 5'-phosphate (PLP). The protein is Pyridoxine/pyridoxamine 5'-phosphate oxidase of Shewanella sp. (strain ANA-3).